Consider the following 261-residue polypeptide: 5'-nucleotidase SurE (261 aa).

Residues Asp-8, Asp-9, Ser-39, and Asn-91 each contribute to the a divalent metal cation site.

This sequence belongs to the SurE nucleotidase family. Requires a divalent metal cation as cofactor.

The protein localises to the cytoplasm. It carries out the reaction a ribonucleoside 5'-phosphate + H2O = a ribonucleoside + phosphate. In terms of biological role, nucleotidase that shows phosphatase activity on nucleoside 5'-monophosphates. This is 5'-nucleotidase SurE from Polaromonas sp. (strain JS666 / ATCC BAA-500).